The chain runs to 86 residues: Toxin Tpa5 (86 aa).

The first 20 residues, 1–20 (MSIFPIALALLLIGLEEGEA), serve as a signal peptide directing secretion. The LCN-type CS-alpha/beta domain maps to 22–85 (RDGYPISKNN…WGDPGTPPCM (64 aa)). Cystine bridges form between Cys-33/Cys-84, Cys-37/Cys-58, Cys-43/Cys-64, and Cys-47/Cys-66.

This sequence belongs to the long (4 C-C) scorpion toxin superfamily. Sodium channel inhibitor family. Beta subfamily. Expressed by the venom gland.

The protein localises to the secreted. Beta toxins bind voltage-independently at site-4 of sodium channels (Nav) and shift the voltage of activation toward more negative potentials thereby affecting sodium channel activation and promoting spontaneous and repetitive firing. In Tityus pachyurus (Colombian scorpion), this protein is Toxin Tpa5.